The sequence spans 423 residues: Histidine--tRNA ligase 2 (423 aa).

This sequence belongs to the class-II aminoacyl-tRNA synthetase family. Homodimer.

The protein resides in the cytoplasm. The catalysed reaction is tRNA(His) + L-histidine + ATP = L-histidyl-tRNA(His) + AMP + diphosphate + H(+). The sequence is that of Histidine--tRNA ligase 2 from Bacillus anthracis.